The primary structure comprises 404 residues: NADH-quinone oxidoreductase subunit D (404 aa).

The protein belongs to the complex I 49 kDa subunit family. In terms of assembly, NDH-1 is composed of 14 different subunits. Subunits NuoB, C, D, E, F, and G constitute the peripheral sector of the complex.

Its subcellular location is the cell inner membrane. It catalyses the reaction a quinone + NADH + 5 H(+)(in) = a quinol + NAD(+) + 4 H(+)(out). Its function is as follows. NDH-1 shuttles electrons from NADH, via FMN and iron-sulfur (Fe-S) centers, to quinones in the respiratory chain. The immediate electron acceptor for the enzyme in this species is believed to be ubiquinone. Couples the redox reaction to proton translocation (for every two electrons transferred, four hydrogen ions are translocated across the cytoplasmic membrane), and thus conserves the redox energy in a proton gradient. This chain is NADH-quinone oxidoreductase subunit D, found in Leptospira borgpetersenii serovar Hardjo-bovis (strain JB197).